The chain runs to 447 residues: Dihydroorotase (447 aa).

Zn(2+) is bound by residues H81 and H83. Substrate contacts are provided by residues 83–85 (HFR) and N115. The Zn(2+) site is built by D171, H198, and H252. N298 provides a ligand contact to substrate. D325 is a binding site for Zn(2+). D325 is a catalytic residue. Residues H329 and 343–344 (FG) contribute to the substrate site.

Belongs to the metallo-dependent hydrolases superfamily. DHOase family. Class I DHOase subfamily. Zn(2+) serves as cofactor.

The enzyme catalyses (S)-dihydroorotate + H2O = N-carbamoyl-L-aspartate + H(+). It functions in the pathway pyrimidine metabolism; UMP biosynthesis via de novo pathway; (S)-dihydroorotate from bicarbonate: step 3/3. Catalyzes the reversible cyclization of carbamoyl aspartate to dihydroorotate. The sequence is that of Dihydroorotase from Ehrlichia canis (strain Jake).